The primary structure comprises 243 residues: 3-deoxy-manno-octulosonate cytidylyltransferase (243 aa).

The protein belongs to the KdsB family.

The protein resides in the cytoplasm. The catalysed reaction is 3-deoxy-alpha-D-manno-oct-2-ulosonate + CTP = CMP-3-deoxy-beta-D-manno-octulosonate + diphosphate. Its pathway is nucleotide-sugar biosynthesis; CMP-3-deoxy-D-manno-octulosonate biosynthesis; CMP-3-deoxy-D-manno-octulosonate from 3-deoxy-D-manno-octulosonate and CTP: step 1/1. It participates in bacterial outer membrane biogenesis; lipopolysaccharide biosynthesis. Activates KDO (a required 8-carbon sugar) for incorporation into bacterial lipopolysaccharide in Gram-negative bacteria. The polypeptide is 3-deoxy-manno-octulosonate cytidylyltransferase (Helicobacter pylori (strain G27)).